Consider the following 202-residue polypeptide: Ras-related protein Rab-18 (202 aa).

GTP is bound by residues Ser-20, Gly-23, Lys-24, Ser-25, Ser-26, Asp-37, Pro-38, Thr-43, Gly-69, Lys-126, Asp-128, and Ala-155. Positions 40–48 match the Effector region motif; that stretch reads QAATIGVDF. The segment at 183–202 is disordered; it reads RPTFRLGQPTDTSSGNLCGC. Residues 191–202 show a composition bias toward polar residues; that stretch reads PTDTSSGNLCGC. S-geranylgeranyl cysteine attachment occurs at residues Cys-200 and Cys-202. Cys-202 carries the cysteine methyl ester modification.

Belongs to the small GTPase superfamily. Rab family.

It catalyses the reaction GTP + H2O = GDP + phosphate + H(+). Functionally, the small GTPases Rab are key regulators of intracellular membrane trafficking, from the formation of transport vesicles to their fusion with membranes. Rabs cycle between an inactive GDP-bound form and an active GTP-bound form that is able to recruit to membranes different sets of downstream effectors directly responsible for vesicle formation, movement, tethering and fusion. Plays a role in apical endocytosis/recycling. May be implicated in transport between the plasma membrane and early endosomes. In Caenorhabditis briggsae, this protein is Ras-related protein Rab-18 (rab-18).